The chain runs to 128 residues: Small ribosomal subunit protein uS8 (128 aa).

It belongs to the universal ribosomal protein uS8 family. In terms of assembly, part of the 30S ribosomal subunit. Contacts proteins S5 and S12.

Functionally, one of the primary rRNA binding proteins, it binds directly to 16S rRNA central domain where it helps coordinate assembly of the platform of the 30S subunit. The chain is Small ribosomal subunit protein uS8 from Methylacidiphilum infernorum (isolate V4) (Methylokorus infernorum (strain V4)).